The sequence spans 315 residues: tRNA uridine(34) hydroxylase (315 aa).

A Rhodanese domain is found at methionine 145–lysine 235. Cysteine 199 functions as the Cysteine persulfide intermediate in the catalytic mechanism.

The protein belongs to the TrhO family.

It catalyses the reaction uridine(34) in tRNA + AH2 + O2 = 5-hydroxyuridine(34) in tRNA + A + H2O. Its function is as follows. Catalyzes oxygen-dependent 5-hydroxyuridine (ho5U) modification at position 34 in tRNAs. This Wigglesworthia glossinidia brevipalpis protein is tRNA uridine(34) hydroxylase.